Reading from the N-terminus, the 232-residue chain is Ribose-5-phosphate isomerase A (232 aa).

Substrate-binding positions include 28–31 (TGST), 83–86 (DGAD), and 96–99 (KGGG). The Proton acceptor role is filled by E105. A substrate-binding site is contributed by K123.

The protein belongs to the ribose 5-phosphate isomerase family. Homodimer.

The catalysed reaction is aldehydo-D-ribose 5-phosphate = D-ribulose 5-phosphate. It participates in carbohydrate degradation; pentose phosphate pathway; D-ribose 5-phosphate from D-ribulose 5-phosphate (non-oxidative stage): step 1/1. In terms of biological role, catalyzes the reversible conversion of ribose-5-phosphate to ribulose 5-phosphate. This chain is Ribose-5-phosphate isomerase A, found in Allorhizobium ampelinum (strain ATCC BAA-846 / DSM 112012 / S4) (Agrobacterium vitis (strain S4)).